The sequence spans 360 residues: Phospho-N-acetylmuramoyl-pentapeptide-transferase (360 aa).

The next 10 helical transmembrane spans lie at 21–41 (YITF…LWIG), 73–93 (TMGG…WADL), 98–118 (VWFV…DDYW), 132–152 (WKYF…YAIG), 168–188 (VMPQ…VGTS), 199–219 (GLAI…AWAT), 236–256 (SGEL…FLWF), 263–283 (VFMG…IAVL), 288–308 (LLLV…ILQV), and 338–358 (VIVR…VTLK).

It belongs to the glycosyltransferase 4 family. MraY subfamily. Requires Mg(2+) as cofactor.

The protein localises to the cell inner membrane. It carries out the reaction UDP-N-acetyl-alpha-D-muramoyl-L-alanyl-gamma-D-glutamyl-meso-2,6-diaminopimeloyl-D-alanyl-D-alanine + di-trans,octa-cis-undecaprenyl phosphate = di-trans,octa-cis-undecaprenyl diphospho-N-acetyl-alpha-D-muramoyl-L-alanyl-D-glutamyl-meso-2,6-diaminopimeloyl-D-alanyl-D-alanine + UMP. The protein operates within cell wall biogenesis; peptidoglycan biosynthesis. Its function is as follows. Catalyzes the initial step of the lipid cycle reactions in the biosynthesis of the cell wall peptidoglycan: transfers peptidoglycan precursor phospho-MurNAc-pentapeptide from UDP-MurNAc-pentapeptide onto the lipid carrier undecaprenyl phosphate, yielding undecaprenyl-pyrophosphoryl-MurNAc-pentapeptide, known as lipid I. In Glaesserella parasuis serovar 5 (strain SH0165) (Haemophilus parasuis), this protein is Phospho-N-acetylmuramoyl-pentapeptide-transferase.